The primary structure comprises 128 residues: MNTFIIFIILIPIVGFALLAVNILLAVYKPYNEKLGAFECGLTSFNQTRLAFNAAFILVAILFLPFDLEISTLLPYVMSIYLVSNYGFTIVLLFLLILIIGFVYEINTNALKINKHNKPNTDSLIYKL.

Helical transmembrane passes span 4–24 (FIIF…VNIL), 50–70 (LAFN…DLEI), and 86–106 (YGFT…VYEI).

It belongs to the complex I subunit 3 family. In terms of assembly, complex I is composed of 37 different subunits.

Its subcellular location is the mitochondrion membrane. The enzyme catalyses a ubiquinone + NADH + 5 H(+)(in) = a ubiquinol + NAD(+) + 4 H(+)(out). Functionally, core subunit of the mitochondrial membrane respiratory chain NADH dehydrogenase (Complex I) that is believed to belong to the minimal assembly required for catalysis. Complex I functions in the transfer of electrons from NADH to the respiratory chain. The immediate electron acceptor for the enzyme is believed to be ubiquinone. In Yarrowia lipolytica (strain CLIB 122 / E 150) (Yeast), this protein is NADH-ubiquinone oxidoreductase chain 3 (ND3).